Consider the following 380-residue polypeptide: MTKKRYTLLKKDGKARRGEFVTPHGTIQTPIFMNVGTLAAIKGAVSSMDLKEIGCQVELSNTYHLHLRPGDKIVKQMGGLHNFMNWDRPILTDSGGFQVFSLAGMRKIKEEGVYFNSHIDGRKIFMGPEESMQIQSNLGSTIAMAFDECIPNPSTREYVEKSVARTTRWLERCKKEMDRLNSLDDTVNKEQMLFGINQGGVYEDIRIEHAKTIREMDLDGYAIGGLAVGETHEEMYRVIDAVVPHLPEDKPIYLMGVGLPSNILEAVERGVDFFDCVLPARNGRHGHVFTKEGKINLMNAKFELDARPIDEGCQCPACKNYTRAYIRHLFKAKEMLAMRLCVLHNLYFYNKLMEDIRDAIDGGYFAEFKAKKLEEWNGRA.

The active-site Proton acceptor is the D93. Residues 93–97 (DSGGF), D147, Q198, and G225 each bind substrate. An RNA binding region spans residues 256–262 (GVGLPSN). D275 (nucleophile) is an active-site residue. The segment at 280-284 (ARNGR) is RNA binding; important for wobble base 34 recognition. Zn(2+) contacts are provided by C313, C315, C318, and H344.

It belongs to the queuine tRNA-ribosyltransferase family. In terms of assembly, homodimer. Within each dimer, one monomer is responsible for RNA recognition and catalysis, while the other monomer binds to the replacement base PreQ1. Zn(2+) is required as a cofactor.

It catalyses the reaction 7-aminomethyl-7-carbaguanine + guanosine(34) in tRNA = 7-aminomethyl-7-carbaguanosine(34) in tRNA + guanine. Its pathway is tRNA modification; tRNA-queuosine biosynthesis. Functionally, catalyzes the base-exchange of a guanine (G) residue with the queuine precursor 7-aminomethyl-7-deazaguanine (PreQ1) at position 34 (anticodon wobble position) in tRNAs with GU(N) anticodons (tRNA-Asp, -Asn, -His and -Tyr). Catalysis occurs through a double-displacement mechanism. The nucleophile active site attacks the C1' of nucleotide 34 to detach the guanine base from the RNA, forming a covalent enzyme-RNA intermediate. The proton acceptor active site deprotonates the incoming PreQ1, allowing a nucleophilic attack on the C1' of the ribose to form the product. After dissociation, two additional enzymatic reactions on the tRNA convert PreQ1 to queuine (Q), resulting in the hypermodified nucleoside queuosine (7-(((4,5-cis-dihydroxy-2-cyclopenten-1-yl)amino)methyl)-7-deazaguanosine). The polypeptide is Queuine tRNA-ribosyltransferase (Clostridium perfringens (strain 13 / Type A)).